Here is a 269-residue protein sequence, read N- to C-terminus: Aegyptin-like protein (269 aa).

Positions 1–19 are cleaved as a signal peptide; the sequence is MKLLLLLASVLCLALIVSA. Residues 19–152 form a disordered region; sequence ARPSDETTDQ…GGAEGGEESP (134 aa). Residues 38–148 are GE-rich region which mediates binding of Ca(2+); that stretch reads TSDSYHQEED…AGEEGGAEGG (111 aa). Acidic residues-rich tracts occupy residues 56 to 73, 98 to 121, and 131 to 149; these read GTED…ESSS, GEED…EGGA, and GGAD…EGGE. Positions 148–269 are mediates binding of host collagen and inhibition of platelet aggregation; sequence GEESPVNTYH…DCIVEKRDSE (122 aa). Disulfide bonds link Cys-208-Cys-261 and Cys-230-Cys-239.

Belongs to the aegyptin family. As to expression, female saliva (at protein level). Distal lateral lobes of female salivary gland (at protein level). Low-level expression in male salivary gland. Not detected in female and male carcasses.

It is found in the secreted. Its function is as follows. Modulates blood feeding of female mosquitoes on vertebrate hosts. Inhibits collagen-induced platelet aggregation in the host via preventing collagen interaction with its ligands: glycoprotein VI and integrin alpha-2/beta-1 (ITGA2/ITGB1). Inhibits collagen-induced increase of Ca(2+) levels in host platelets. Binds to host collagens. Binds Ca(2+). Prevents a decrease in platelet count in the host blood after collagen injection. In terms of biological role, (Microbial infection) Does not affect the development of Plasmodium berghei parasites in mosquitoes. The protein is Aegyptin-like protein of Anopheles stephensi (Indo-Pakistan malaria mosquito).